The following is a 483-amino-acid chain: E3 ubiquitin-protein ligase TRIM50 (483 aa).

The RING-type zinc-finger motif lies at 16 to 57; that stretch reads CPICLEVFKEPLMLQCGHSYCKNCLDSLSEHLDSELRCPVCR. The B box-type zinc-finger motif lies at 84–125; it reads TEPTVCVHHRNPLSLFCEKDQEFICGLCGLLGSHQHHRVTPV. Zn(2+)-binding residues include cysteine 89, histidine 92, cysteine 111, and histidine 117. 2 coiled-coil regions span residues 127–169 and 203–236; these read TVYS…NESD and GLVA…GNES. One can recognise a B30.2/SPRY domain in the interval 275-474; sequence DIKLTVWKRL…LPMVLPPPSA (200 aa). Lysine 372 carries the post-translational modification N6-acetyllysine.

It belongs to the TRIM/RBCC family. In terms of assembly, can form dimers and trimers. Interacts with several E2 ubiquitin-conjugating enzymes, including UBE2L6, UBE2E1, UBE2E3. No interaction with UBE2H. Interacts with BECN1. Interacts with SQSTM1. Interacts with NLRP3. In terms of processing, auto-ubiquitinated. Acetylated by EP300 and KAT2B. HDAC6 drives TRIM50 deacetylation. Acetylation antagonizes with TRIM50 ubiquitination.

It localises to the cytoplasm. The catalysed reaction is S-ubiquitinyl-[E2 ubiquitin-conjugating enzyme]-L-cysteine + [acceptor protein]-L-lysine = [E2 ubiquitin-conjugating enzyme]-L-cysteine + N(6)-ubiquitinyl-[acceptor protein]-L-lysine.. E3 ubiquitin-protein ligase that ubiquitinates Beclin-1/BECN1 in a 'Lys-63'-dependent manner enhancing its binding to ULK1. In turn, promotes starvation-induced autophagy activation. Also interacts with p62/SQSTM1 protein and thereby induces the formation and the autophagy clearance of aggresome-associated polyubiquitinated proteins through HDAC6 interaction. Also promotes NLRP3 inflammasome activation by directly inducing NLRP3 oligomerization independent of its E3 ligase function. This chain is E3 ubiquitin-protein ligase TRIM50 (Trim50), found in Rattus norvegicus (Rat).